A 530-amino-acid chain; its full sequence is Ubiquitin carboxyl-terminal hydrolase 17-like protein 21 (530 aa).

The region spanning 80–375 (AGLQNMGNTC…QAYVLFYIQK (296 aa)) is the USP domain. Cys-89 (nucleophile) is an active-site residue. The active-site Proton acceptor is His-334. Basic and acidic residues-rich tracts occupy residues 382–392 (SESVSRGREPR) and 398–412 (DTDR…KRDH). Disordered stretches follow at residues 382-412 (SESV…KRDH) and 477-530 (NHHP…LVCQ). The segment covering 493 to 505 (TPTHQESMNTGTL) has biased composition (polar residues). Residues 510–524 (GRARRSKGKNKHSKR) show a composition bias toward basic residues.

It belongs to the peptidase C19 family. USP17 subfamily.

Its subcellular location is the nucleus. The protein localises to the endoplasmic reticulum. It carries out the reaction Thiol-dependent hydrolysis of ester, thioester, amide, peptide and isopeptide bonds formed by the C-terminal Gly of ubiquitin (a 76-residue protein attached to proteins as an intracellular targeting signal).. Deubiquitinating enzyme that removes conjugated ubiquitin from specific proteins to regulate different cellular processes that may include cell proliferation, progression through the cell cycle, apoptosis, cell migration, and the cellular response to viral infection. This chain is Ubiquitin carboxyl-terminal hydrolase 17-like protein 21 (USP17L21), found in Homo sapiens (Human).